The sequence spans 425 residues: Serine--tRNA ligase (425 aa).

2 disordered regions span residues 43 to 69 (QRSS…SDPK) and 108 to 134 (LPNL…WGKP). A compositionally biased stretch (basic and acidic residues) spans 117 to 134 (PEGRDENDNQERHRWGKP). 233–235 (TAE) is an L-serine binding site. Residue 264–266 (RRE) participates in ATP binding. E287 is an L-serine binding site. An ATP-binding site is contributed by 351-354 (EISS). S385 is a binding site for L-serine.

It belongs to the class-II aminoacyl-tRNA synthetase family. Type-1 seryl-tRNA synthetase subfamily. Homodimer. The tRNA molecule binds across the dimer.

It localises to the cytoplasm. The catalysed reaction is tRNA(Ser) + L-serine + ATP = L-seryl-tRNA(Ser) + AMP + diphosphate + H(+). It catalyses the reaction tRNA(Sec) + L-serine + ATP = L-seryl-tRNA(Sec) + AMP + diphosphate + H(+). Its pathway is aminoacyl-tRNA biosynthesis; selenocysteinyl-tRNA(Sec) biosynthesis; L-seryl-tRNA(Sec) from L-serine and tRNA(Sec): step 1/1. In terms of biological role, catalyzes the attachment of serine to tRNA(Ser). Is also able to aminoacylate tRNA(Sec) with serine, to form the misacylated tRNA L-seryl-tRNA(Sec), which will be further converted into selenocysteinyl-tRNA(Sec). The sequence is that of Serine--tRNA ligase from Prochlorococcus marinus (strain MIT 9313).